A 1321-amino-acid chain; its full sequence is C-Jun-amino-terminal kinase-interacting protein 4 (1321 aa).

Met-1 bears the N-acetylmethionine mark. Residues 7 to 95 form the RH1 domain; sequence VVYQEEPGGS…ITQYEREKAL (89 aa). The stretch at 66 to 166 forms a coiled coil; it reads AQDQEHQVEL…NALHQRHTEM (101 aa). Phosphoserine occurs at positions 109, 183, 185, 194, and 203. Positions 203 to 308 are disordered; the sequence is SLGIFPLPAG…EGFVKGTDTS (106 aa). Thr-217 is subject to Phosphothreonine. A compositionally biased stretch (polar residues) spans 236–248; it reads ELSQPRSHTSLKV. A phosphoserine mark is found at Ser-238, Ser-251, Ser-265, Ser-268, and Ser-272. Over residues 266–285 the composition is skewed to polar residues; the sequence is DISQGGSKATTPASTANSDV. Thr-292 carries the phosphothreonine modification. Phosphoserine occurs at positions 311, 329, 332, and 347. Over residues 322–332 the composition is skewed to polar residues; it reads AQETRNVSTES. The segment at 322–341 is disordered; it reads AQETRNVSTESGENEEKSEV. Phosphothreonine is present on residues Thr-348, Thr-365, and Thr-418. The stretch at 408–534 forms a coiled coil; sequence REVENLILEN…LQEAVRWTEM (127 aa). Residues 473–489 are compositionally biased toward basic and acidic residues; sequence LRKARAEAEDARQKAKD. Disordered regions lie at residues 473–500 and 563–600; these read LRKA…TAQR and SSNA…SQLP. Positions 500-604 constitute an RH2 domain; it reads RKRFTRVEMA…TLSQLPGDKS (105 aa). At Thr-586 the chain carries Phosphothreonine. Residue Ser-588 is modified to Phosphoserine. Residue Thr-595 is modified to Phosphothreonine. Phosphoserine is present on residues Ser-705, Ser-728, Ser-730, Ser-732, and Ser-733. Positions 724–758 form a coiled coil; that stretch reads SKQRSASQSSLDKLDQELKEQQKEFKNQEELSSQV. Residues 853-883 form a disordered region; that stretch reads TGAATSPSTNGASPVIEKPPEMETENSEVDE. Over residues 855–864 the composition is skewed to polar residues; that stretch reads AATSPSTNGA. The span at 874–883 shows a compositional bias: acidic residues; it reads METENSEVDE. Position 1188 is a phosphoserine (Ser-1188). Residues 1239-1267 are disordered; it reads PQSSSGGADLTADKAGSSAQEPSSQTPLK. Residues 1255–1266 are compositionally biased toward polar residues; that stretch reads SSAQEPSSQTPL. Thr-1264 carries the post-translational modification Phosphothreonine.

This sequence belongs to the JIP scaffold family. In terms of assembly, homodimer. The homodimer interacts with ARF6, forming a heterotetramer. Homooligomer. Interacts with MAX, MAPK8, MAPK14, MAP3K3, MYC, and MAP2K4. Interacts with KNS2. Interaction with KNS2 is important in the formation of ternary complex with MAPK8. Interacts with PIP4P1. Interacts with PIKFYVE. Post-translationally, phosphorylated by MAPK8 and MAPK14. As to expression, highly expressed in brain, kidney, liver, heart.

The protein resides in the cytoplasm. The protein localises to the perinuclear region. It localises to the lysosome membrane. The JNK-interacting protein (JIP) group of scaffold proteins selectively mediates JNK signaling by aggregating specific components of the MAPK cascade to form a functional JNK signaling module. Regulates lysosomal positioning by acting as an adapter protein which links PIP4P1-positive lysosomes to the dynein-dynactin complex. Assists PIKFYVE selective functionality in microtubule-based endosome-to-TGN trafficking. In Mus musculus (Mouse), this protein is C-Jun-amino-terminal kinase-interacting protein 4.